The primary structure comprises 2293 residues: G-protein coupled receptor 179 (2293 aa).

The signal sequence occupies residues 1–27 (MGARAVVISSLAWGLLSCCFLCSGALG). The interval 62-245 (FLYSGDVQRL…CHEGQLRPGW (184 aa)) is cache-like region. N-linked (GlcNAc...) asparagine glycosylation is present at Asn-75. Cys-76 and Cys-236 are joined by a disulfide. Residue Asn-298 is glycosylated (N-linked (GlcNAc...) asparagine). 7 consecutive transmembrane segments (helical) span residues 383–403 (AVLA…LVAY), 416–436 (IVLL…VFIL), 445–465 (CVAL…TIIL), 494–514 (LGQL…GALE), 544–564 (YIMV…CYAT), 585–602 (LLLS…VPSL), and 608–628 (LLLF…LIFI). A disulfide bridge links Cys-445 with Cys-537. Residue Asn-661 is glycosylated (N-linked (GlcNAc...) asparagine). Positions 733-812 (QHSRDSGSLG…GRESLADGPP (80 aa)) are disordered. Over residues 738 to 759 (SGSLGLGSLPGSSRRRLLSSSL) the composition is skewed to low complexity. A compositionally biased stretch (basic and acidic residues) spans 773–782 (STYDHHREHN). N-linked (GlcNAc...) asparagine glycosylation occurs at Asn-823. Disordered regions lie at residues 872-935 (EERK…HPPI), 1046-1235 (GTGE…NPAL), 1275-1294 (ERTE…LSRS), 1326-1345 (EAVC…QLVH), 1388-1411 (GTST…ATFW), 1479-1560 (ELAG…HGGS), 1578-1770 (ATLS…VCPW), 1792-1828 (TVGK…TSKG), 1844-1882 (WKPP…KGEL), 1924-2051 (SSSH…GSEK), and 2212-2293 (FLPE…WDCE). Polar residues predominate over residues 1080–1089 (LKTPLQQGSV). Basic and acidic residues-rich tracts occupy residues 1105–1123 (TYKE…KGKP), 1173–1186 (CQKE…DRNK), and 1275–1286 (ERTEGGSLEKKP). 2 stretches are compositionally biased toward basic and acidic residues: residues 1546–1555 (ASSKAGEKLL) and 1597–1632 (RTSE…RIQK). Residues 1644–1663 (PGSTPQRDTEKAQASLQRQG) are compositionally biased toward polar residues. Composition is skewed to basic and acidic residues over residues 1682 to 1698 (GEER…RPND) and 1717 to 1728 (KKSERLGSEKEV). The span at 1737 to 1747 (PGDSSQQPDTP) shows a compositional bias: polar residues. Basic and acidic residues-rich tracts occupy residues 1748–1761 (NTEK…EHGS), 1796–1813 (GLER…RQNL), and 1872–1882 (ASDRASEKGEL). Over residues 1937–1948 (RVSSQPLVSTGD) the composition is skewed to polar residues. The span at 1979–2007 (TETEMSRQDEKEKSQEEKERAPETRDHEG) shows a compositional bias: basic and acidic residues. Residues 2283–2293 (SPPPDYPWDCE) are compositionally biased toward pro residues.

Belongs to the G-protein coupled receptor 3 family. In terms of assembly, homodimer. Associates with the R7 group RGS-GNB5 complexes, composed of an R7 group RGS subunit (RGS6, RGS7, RGS9 or RGS11) and GNB5, promoting their localization to the cell membrane and regulating the GTPase activator activity of R7 RGS proteins. Interacts with TRPM1. Interacts with GRM6. Interacts with EGFLAM; transsynaptic interaction is required for synaptic organization of photoreceptor cells.

The protein resides in the cell membrane. Its subcellular location is the postsynaptic cell membrane. It is found in the cell projection. The protein localises to the dendrite. Orphan receptor involved in vision. Required for signal transduction through retinal depolarizing bipolar cells. Acts as an atypical G-protein coupled receptor that recruits and regulates the R7 group RGS-GNB5 complexes instead of activating G proteins: promotes the GTPase activator activity of R7 RGS proteins, increasing the GTPase activity of G protein alpha subunits, thereby driving them into their inactive GDP-bound form. Associates with components of metabotropic signaling cascade in retina ON-bipolar neurons, such as TRPM1 and GRM6: may control the ability of the GRM6 cascade to gate TRPM1. This Mus musculus (Mouse) protein is G-protein coupled receptor 179.